The primary structure comprises 85 residues: WAP four-disulfide core domain protein 12 (85 aa).

Positions 1–21 (MWPNSILVLMTLLISSTLVTG) are cleaved as a signal peptide. One can recognise a WAP domain in the interval 25 to 72 (KGEEKRVCPPDYVRCIRQDDPQCYSDNDCGDQEICCFWQCGFKCVLPV). Cystine bridges form between C32/C60, C39/C64, C47/C59, and C53/C68.

As to expression, constitutively expressed in tongue.

The protein localises to the secreted. Functionally, antibacterial protein which inhibits the growth of E.coli and S.aureus. Putative acid-stable proteinase inhibitor. This chain is WAP four-disulfide core domain protein 12, found in Mus musculus (Mouse).